Consider the following 309-residue polypeptide: Probable (S)-ureidoglycine aminohydrolase (309 aa).

Positions 1 to 22 are cleaved as a signal peptide; it reads MMLPRLLLLVVASALPLASVAA. The Mn(2+) site is built by Glu-245, His-247, His-251, and Gln-285. Glu-245 contributes to the substrate binding site. Gln-285, Tyr-297, and Lys-301 together coordinate substrate.

It belongs to the UGHY family. As to quaternary structure, homooctamer. The cofactor is Mn(2+).

The protein resides in the endoplasmic reticulum. It catalyses the reaction (S)-2-ureidoglycine + H2O = (S)-ureidoglycolate + NH4(+). Involved in the catabolism of purine nucleotides. The sequential activity of AAH, UGLYAH and UAH allows a complete purine breakdown without the intermediate generation of urea. This chain is Probable (S)-ureidoglycine aminohydrolase (UGLYAH), found in Oryza sativa subsp. japonica (Rice).